The sequence spans 210 residues: tRNA (guanine-N(7)-)-methyltransferase (210 aa).

Residues Glu43, Glu68, Asp95, and Asp117 each coordinate S-adenosyl-L-methionine. The active site involves Asp117. Substrate is bound by residues Lys121, Asp153, and Thr190–Glu193.

It belongs to the class I-like SAM-binding methyltransferase superfamily. TrmB family.

It carries out the reaction guanosine(46) in tRNA + S-adenosyl-L-methionine = N(7)-methylguanosine(46) in tRNA + S-adenosyl-L-homocysteine. The protein operates within tRNA modification; N(7)-methylguanine-tRNA biosynthesis. Catalyzes the formation of N(7)-methylguanine at position 46 (m7G46) in tRNA. The chain is tRNA (guanine-N(7)-)-methyltransferase from Macrococcus caseolyticus (strain JCSC5402) (Macrococcoides caseolyticum).